Here is a 117-residue protein sequence, read N- to C-terminus: Hydrogenase maturation factor HypA (117 aa).

His-2 contributes to the Ni(2+) binding site. Zn(2+) is bound by residues Cys-73, Cys-76, Cys-90, and Cys-93.

It belongs to the HypA/HybF family.

Its function is as follows. Involved in the maturation of [NiFe] hydrogenases. Required for nickel insertion into the metal center of the hydrogenase. This Pectobacterium atrosepticum (strain SCRI 1043 / ATCC BAA-672) (Erwinia carotovora subsp. atroseptica) protein is Hydrogenase maturation factor HypA.